The primary structure comprises 393 residues: Succinate--CoA ligase [ADP-forming] subunit beta (393 aa).

The region spanning 9–237 (RDLFAKHGVP…KDAANPLEAA (229 aa)) is the ATP-grasp domain. Residues Lys-45, 52–54 (GRG), Glu-92, Pro-95, and Glu-100 contribute to the ATP site. 2 residues coordinate Mg(2+): Asn-192 and Asp-206. Substrate-binding positions include Asn-257 and 319 to 321 (GIT).

Belongs to the succinate/malate CoA ligase beta subunit family. As to quaternary structure, heterotetramer of two alpha and two beta subunits. Requires Mg(2+) as cofactor.

The enzyme catalyses succinate + ATP + CoA = succinyl-CoA + ADP + phosphate. It catalyses the reaction GTP + succinate + CoA = succinyl-CoA + GDP + phosphate. The protein operates within carbohydrate metabolism; tricarboxylic acid cycle; succinate from succinyl-CoA (ligase route): step 1/1. Its function is as follows. Succinyl-CoA synthetase functions in the citric acid cycle (TCA), coupling the hydrolysis of succinyl-CoA to the synthesis of either ATP or GTP and thus represents the only step of substrate-level phosphorylation in the TCA. The beta subunit provides nucleotide specificity of the enzyme and binds the substrate succinate, while the binding sites for coenzyme A and phosphate are found in the alpha subunit. The chain is Succinate--CoA ligase [ADP-forming] subunit beta from Streptomyces griseus subsp. griseus (strain JCM 4626 / CBS 651.72 / NBRC 13350 / KCC S-0626 / ISP 5235).